Here is a 3268-residue protein sequence, read N- to C-terminus: MVLFTRCEKARKEKLAAGYKPLVDYLIDCDTPTFLERIEAIQEWDRSRDDLYVWIPILDRMDGLLLKVAEKYKYKQDPKKECEVKLVEMEAHDVDYCLKMLKFTRRLLLNTENRFVYSSGDVLMYLLNCPNFTIKLAVMRILAILGERFVIAREKIVAHNIFGDHNLRKKTLKLALSLSSSVMDEDGEHFSLVDLYFDKKKVPQKWRKLRFTHYTSNDFKKSSQQKNNINETQTSIKKVTMTTQELCEHSLQQIFDKGMALLPAESWFDFSIKASVAKAFSDDSGENIDLRNIIIETKLNAIAFVNTIFSPPQVSSKLFELDPYAFNSLTDLISLSETKIPKELRTDALFTLECISLKHVWCSDIIRNLGGNISHGLLFQILRYIAKTLREATDEIDEEYNVRFFYLISNLADVKPLHESLFAAGLIPTLLEIVSIRNCPYKRTLASATHLLETFIDNSETTTEFIENDGFTMLITSVANEIDFTLAHPETWQPPKYSVVYYSISFRELAYIRSLLKLVLKLLSTDSGDRIRNLIDSPILVSLKKILENKLVFGLTLITYTLDVVQKVINSEPTIYPVLVEAGLIPYVIDNFPKLIGPSAELLSLLPDVVSAICLNPEGLKQVKEKGLINNLFDFLLDADHARILTGGDRSTEYGTDIDELARHYPDLKANIVEALCNVIRKMPSTFRNEREFLFTSPKDQKYFFHRKNEEILTDKEEHEPAYWELLDKGTMLDTFTSVLFGMSLGNGSFSQVPQHLEARDFLAIIFMENPPYEYFTSVAISNVTEVLQYLDEKYEDYAFMDVMKVLNDQLENLNDFLNSPNDRSFFLERDGENSVRSCHSKLCRLAAILNIVTNVYIDLTTLSCKRIMQIYSYFDKRGFSLIKNLKLLFQKCALEEMYIRQHMPDSVITETMPLPIVDVSGDGPPLQIYIDDPKKGDQKGKITSVKTRNTLQMRTILYTLQSNTAILFRCFLRLSHSRNMDLEHKDLTTEVHIFENVVENVIEMLKATELEGHLPYILVLLNFNTFVFTIPKASPNSTEILQTIPAYIFYQKGGYLLYLHIIRDLFTRMTKIKDLSSLDNINYIDESNGILTLSCLINALTFYNKSMQTETMENVQSIGKYYVSIDDDYNIMKALTVPIKVMALAMILDLDKSDSLFKTQSRNVPYSVFKQLLSMLKNIFTNVNIYTKELYELHWDLIFPPIKKISLFEQVGIPGDVAANYLTDTGDDLPADNSIGLFSPEQWEKYKKLIGEDKSIYYPQPMQAQYYKGCSSKELDELRDTFFNDGLPSRIFTVLPFYPKLVNAFAKTLLQIFTKYDEPTEVFAGRILDRILETDLDDPATLSSLIHLFGIFLNEKYIYQKASHLMQRFIEYLEKSLKPEHVNTPWFSKALYVYEIILAKSELPHLEELSKDVLLRYPLLSMAKVFRIPDPMKQKLFDILIRVSDISNFYSALATSRILIFYSRDELYANNIARSGILSRLLKVIGSFQKLDKINFLESSFLLLTRRCFETTENVDALIRAEINRSFTARPLGGGDDAVRELTTILEEKAHVVMRSPSQFIDVLCETARFHEFDDQGALVDYSLKRFLGEKDKNTQASSTEKSDIYERTGIMHLLLSQLMAASEKDWLSEPANSSDLPENKKAQLDPSRNPVCAYMIFLLKLLVELVSSYNQCKFEFLTFSRRNTYAERPRPRTTAINFFLYRLLDKPVGTDHDKHEAKRREVIGMLARSVIIGFLATVQDDRTTKTDVKLADPHMNFIRKFAIEAIIKAIRNATSSSKLLESNHLKLDMWFRIITSMVYVQAPYLRQLLDSNKVEADQYQLCKLVIDLGLPSVITEAMASIDLNYPFSKKIFNVAVEALNTISSTRNNFSEHFKIEDHDEVEDEVDESDKEEIPDMFKNSALGMYDVEDIEEDDDDDTSLIGDDDAMAFVDSDNGFEVVFSDEDDDMGEEDADDARSDSEENELSSEMQSSTADGTDVDYEVDDADGLIINIDQPSGDDEEMADYDANISHSSHSENEDDASMDVIEVYDDELSSGYDVDLSDYDVDESDWDSGLSSLSISDEDSESSEDEPINSTRMGDSRRRWLIAEGVELTDDSQGESEEDDRGVFRGIEHIFSNENEPLFRVHDEMRHRNHHRSINRTHFHSAMSAPSLSLLNRGRRNQSNLINPLGPTGLEQVENDISDQVTVAGSGSRPRSHHLHFSEVLVSGSFFDEPVLDGIILKSTVSRWKDIFDMFYDSKTYANCIIPTVINRLYKVSLALQKDLENKREQEKLKNKNLLFNEAKVESHNSSDAISVEQDDIQESNVTHDDHEPVYVTIQGSEVDIGGTDIDPEFMNALPDDIRADVFAQHVRERRAEARLNSDHNVHSREIDSDFLEAIPEDIREGILDTEAEEQRMFGRIGSSADVIRADDDVSNNDEEVENGLDHGNSNDRNNADPEKKKPARIYFAPLIDRAGIASLMKSVFISKPYIQREIYHELFYRLCSSKQNRNDLMNTFLFILSEGIIDQHSLEKVYNIISSRAMGHAKTTTVRQLPSDCTPLTVANQTIEILQSLIDADSRLKYFLIAEHDNLIVNKANNKSRKEALPDKKLRWPLWHLFSLLDRKLITDESVLMDLLTRILQVCTKTLAVLSTSSNGKENLSKKFHLPSFDEDDLMKILSIIMLDSCTTRVFQQTLNIIYNLSKLQGCMSIFTKHLVSLAISIMSKLKSALDGLSREVGTITTGMEINSELLQKFTLPSSDQAKLLKILTTVDFLYTHKRKEEERNVKDLQSLYDKMNGGPVWSSLSECLSQFEKSQAINTSATILLPLIESLMVVCRRSDLSQNRNTAVKYEDAKLLDFSKTRVENLFFPFTDAHKKLLNQMIRSNPKLMSGPFALLVKNPKVLDFDNKRYFFNAKLKSDNQERPKLPITVRREQVFLDSYRALFFKTNDEIKNSKLEITFKGESGVDAGGVTREWYQVLSRQMFNPDYALFLPVPSDKTTFHPNRTSGINPEHLSFFKFIGMIIGKAIRDQCFLDCHFSREVYKNILGRPVSLKDMESLDPDYYKSLVWILENDITDIIEETFSVETDDYGEHKVINLIEGGKDIIVTEANKQDYVKKVVEYKLQTSVKEQMDNFLVGFYALISKDLITIFDEQELELLISGLPDIDVDDWKNNTTYVNYTATCKEVSYFWRAVRSFDAEERAKLLQFVTGTSKVPLNGFKELSGVNGVCKFSIHRDFGSSERLPSSHTCFNQLNLPPYESYETLRGSLLLAINEGHEGFGLA.

S1890 carries the post-translational modification Phosphoserine. 2 disordered regions span residues 1941-2023 (VFSD…EDDA) and 2038-2083 (GYDV…MGDS). Positions 1942–1955 (FSDEDDDMGEEDAD) are enriched in acidic residues. Polar residues predominate over residues 1967 to 1976 (SSEMQSSTAD). 3 stretches are compositionally biased toward acidic residues: residues 1978-1988 (TDVDYEVDDAD), 2042-2053 (DLSDYDVDESDW), and 2063-2074 (SDEDSESSEDEP). Position 2096 is a phosphothreonine (T2096). 4 positions are modified to phosphoserine: S2119, S2376, S2406, and S2418. Acidic residues predominate over residues 2416–2426 (DVSNNDEEVEN). Residues 2416–2443 (DVSNNDEEVENGLDHGNSNDRNNADPEK) are disordered. The region spanning 2932–3268 (TNDEIKNSKL…NEGHEGFGLA (337 aa)) is the HECT domain. The active-site Glycyl thioester intermediate is C3235.

Belongs to the UPL family. TOM1/PTR1 subfamily. As to quaternary structure, interacts with the ADA3/NGG1 subunit of the SAGA complex. Interacts with KRR1.

The protein localises to the nucleus. Its subcellular location is the nucleolus. The enzyme catalyses S-ubiquitinyl-[E2 ubiquitin-conjugating enzyme]-L-cysteine + [acceptor protein]-L-lysine = [E2 ubiquitin-conjugating enzyme]-L-cysteine + N(6)-ubiquitinyl-[acceptor protein]-L-lysine.. It participates in protein modification; protein ubiquitination. Functionally, probable ubiquitin ligase protein involved in many cellular processes, such as transcription regulation, maintenance of nuclear structure, cell cycle, mRNA export and rRNA maturation. E3 ubiquitin ligase proteins mediate ubiquitination and subsequent proteasomal degradation of target proteins. Involved in transcription regulation by interacting, and probably mediating, ubiquitination of some subunit of the SAGA complex. Required for SPT7 ubiquitination. Participates in mRNA export from the nucleus by regulating the transport of hnRNP proteins. Required for the shuttling of hnRNP protein NAB2, probably by mediating ubiquitination of a protein associated with NAB2. Also required for full induction of the general stress and heat-shock responses. Involved in 18S rRNA maturation by affecting several early steps in the rRNA processing pathway. The polypeptide is E3 ubiquitin-protein ligase TOM1 (TOM1) (Saccharomyces cerevisiae (strain ATCC 204508 / S288c) (Baker's yeast)).